We begin with the raw amino-acid sequence, 951 residues long: Leucine-rich repeat-containing G-protein coupled receptor 4 (951 aa).

A signal peptide spans 1–19 (MPGPLGLLCFLALGLRGSA). The Extracellular segment spans residues 20–544 (EPSGAAPPLC…LLGSWMIRLT (525 aa)). Residues 25-57 (APPLCAAPCSCDGDRRVDCSGKGLTAVPEGLSA) form the LRRNT domain. Cystine bridges form between Cys29-Cys35 and Cys33-Cys43. LRR repeat units follow at residues 35-58 (CDGDRRVDCSGKGLTAVPEGLSAF), 59-79 (TQLLDISMNNITQLPEDAFKN), 81-103 (PFLEELRLAGNDLSFIHPKALSG), 104-127 (LKELKVLTLQNNQLKTVPSEAIRG), 128-151 (LSSLQSLRLDANHITSVPEDSFEG), 153-175 (TQLRHLWLDDNSLTEVPVHPLSN), 176-199 (LPTLQALTLALNKISSIPDFAFTN), 201-223 (SSLVVLHLHNNKIKSLGQHCFDG), 224-247 (LDNLETLDLNYNNLGEFPQAIKAL), 248-270 (PSLKELLFHSNSISVIPDGAFDG), and 272-294 (PLLKTIHLYDNPLSFVGNSAFHN). Asn68 carries N-linked (GlcNAc...) asparagine glycosylation. Asn199 is a glycosylation site (N-linked (GlcNAc...) asparagine). 2 N-linked (GlcNAc...) asparagine glycosylation sites follow: Asn294 and Asn314. LRR repeat units follow at residues 318–341 (TVRLESLTLTGTKISSISNNLCQE), 342–363 (QKRLRTLDLSYNSIKDLPSFNG), 364–387 (CHALEEISLQRNQIHQIKEDTFQG), 388–411 (LTSLKILDLSRNLIHEIDDRAFAK), and 413–435 (GSITNLDVSFNELTSFPTEGLNG). A disulfide bridge links Cys339 with Cys364. 2 disulfides stabilise this stretch: Cys470/Cys522 and Cys471/Cys476. The chain crosses the membrane as a helical span at residues 545 to 565 (VWFIFLVALFFNLLVILTTFA). Residues 566 to 575 (SCTSVPSSKL) lie on the Cytoplasmic side of the membrane. Residues 576-596 (FIGLISVSNLFMGAYTGILTF) traverse the membrane as a helical segment. Over 597–619 (LDAVSWGRFAEFGIWWEIGSGCK) the chain is Extracellular. An intrachain disulfide couples Cys618 to Cys693. A helical transmembrane segment spans residues 620–640 (IAGFLAVFSSESAIFLLMLAA). Topologically, residues 641–661 (VERSLSAKDMMKNGKSNHLRQ) are cytoplasmic. The helical transmembrane segment at 662–682 (FRIAALLAFLGAAVAGSFPLF) threads the bilayer. Residues 683-703 (HRGEYSASPLCLPFPTGETPS) lie on the Extracellular side of the membrane. Residues 704–724 (LGFTVTLVLLNSLAFLLMAII) traverse the membrane as a helical segment. Topologically, residues 725–756 (YTKLYCNLEKEDLSESSQSSMIKHVAWLIFTN) are cytoplasmic. Residues 757-777 (CIFFCPVAFFSFAPLITAVSI) traverse the membrane as a helical segment. At 778-783 (SPEIMK) the chain is on the extracellular side. Residues 784–804 (SVTLIFFPLPACLNPVLYVFF) form a helical membrane-spanning segment. At 805-951 (NPKFKEDWKL…YAYNLPRVKD (147 aa)) the chain is on the cytoplasmic side. Phosphoserine is present on Ser920.

This sequence belongs to the G-protein coupled receptor 1 family.

It localises to the cell membrane. Receptor for R-spondins that potentiates the canonical Wnt signaling pathway and is involved in the formation of various organs. Upon binding to R-spondins (RSPO1, RSPO2, RSPO3 or RSPO4), associates with phosphorylated LRP6 and frizzled receptors that are activated by extracellular Wnt receptors, triggering the canonical Wnt signaling pathway to increase expression of target genes. In contrast to classical G-protein coupled receptors, does not activate heterotrimeric G-proteins to transduce the signal. Its function as activator of the Wnt signaling pathway is required for the development of various organs, including liver, kidney, intestine, bone, reproductive tract and eye. May also act as a receptor for norrin (NDP), such results however required additional confirmation in vivo. Required during spermatogenesis to activate the Wnt signaling pathway in peritubular myoid cells. Required for the maintenance of intestinal stem cells and Paneth cell differentiation in postnatal intestinal crypts. Acts as a regulator of bone formation and remodeling. Involved in kidney development; required for maintaining the ureteric bud in an undifferentiated state. Involved in the development of the anterior segment of the eye. Required during erythropoiesis. Also acts as a negative regulator of innate immunity by inhibiting TLR2/TLR4 associated pattern-recognition and pro-inflammatory cytokine production. Plays an important role in regulating the circadian rhythms of plasma lipids, partially through regulating the rhythmic expression of MTTP. Required for proper development of GnRH neurons (gonadotropin-releasing hormone expressing neurons) that control the release of reproductive hormones from the pituitary gland. This is Leucine-rich repeat-containing G-protein coupled receptor 4 (LGR4) from Bos taurus (Bovine).